Consider the following 133-residue polypeptide: Sec-independent protein translocase protein TatB (133 aa).

A helical membrane pass occupies residues 1-21 (MFDIGFWELVLIAIVALVVLG). The segment at 67-133 (EQMGMQNLSP…ASQPAEKKAE (67 aa)) is disordered. The segment covering 70–84 (GMQNLSPELQKSVES) has biased composition (polar residues). Over residues 97 to 116 (AATPSSEASSTSSNPSSATE) the composition is skewed to low complexity.

It belongs to the TatB family. As to quaternary structure, the Tat system comprises two distinct complexes: a TatABC complex, containing multiple copies of TatA, TatB and TatC subunits, and a separate TatA complex, containing only TatA subunits. Substrates initially bind to the TatABC complex, which probably triggers association of the separate TatA complex to form the active translocon.

It is found in the cell inner membrane. Its function is as follows. Part of the twin-arginine translocation (Tat) system that transports large folded proteins containing a characteristic twin-arginine motif in their signal peptide across membranes. Together with TatC, TatB is part of a receptor directly interacting with Tat signal peptides. TatB may form an oligomeric binding site that transiently accommodates folded Tat precursor proteins before their translocation. This Vibrio cholerae serotype O1 (strain ATCC 39315 / El Tor Inaba N16961) protein is Sec-independent protein translocase protein TatB.